Consider the following 134-residue polypeptide: Profilin-2 (134 aa).

A disulfide bridge links Cys13 with Cys118. The Involved in PIP2 interaction motif lies at 84–100 (AVIRGKKGSGGITIKKT). At Thr114 the chain carries Phosphothreonine.

Belongs to the profilin family. As to quaternary structure, occurs in many kinds of cells as a complex with monomeric actin in a 1:1 ratio. Post-translationally, phosphorylated by MAP kinases.

The protein resides in the cytoplasm. Its subcellular location is the cytoskeleton. Its function is as follows. Binds to actin and affects the structure of the cytoskeleton. At high concentrations, profilin prevents the polymerization of actin, whereas it enhances it at low concentrations. This chain is Profilin-2, found in Olea europaea (Common olive).